Consider the following 81-residue polypeptide: ATP synthase subunit c, chloroplastic (81 aa).

2 consecutive transmembrane segments (helical) span residues 7-27 and 57-77; these read AASVIAAGLAVGLASIGPGIG and LAFMEALTIYGLVVALALLFA.

Belongs to the ATPase C chain family. As to quaternary structure, F-type ATPases have 2 components, F(1) - the catalytic core - and F(0) - the membrane proton channel. F(1) has five subunits: alpha(3), beta(3), gamma(1), delta(1), epsilon(1). F(0) has four main subunits: a(1), b(1), b'(1) and c(10-14). The alpha and beta chains form an alternating ring which encloses part of the gamma chain. F(1) is attached to F(0) by a central stalk formed by the gamma and epsilon chains, while a peripheral stalk is formed by the delta, b and b' chains.

The protein resides in the plastid. The protein localises to the chloroplast thylakoid membrane. Functionally, f(1)F(0) ATP synthase produces ATP from ADP in the presence of a proton or sodium gradient. F-type ATPases consist of two structural domains, F(1) containing the extramembraneous catalytic core and F(0) containing the membrane proton channel, linked together by a central stalk and a peripheral stalk. During catalysis, ATP synthesis in the catalytic domain of F(1) is coupled via a rotary mechanism of the central stalk subunits to proton translocation. In terms of biological role, key component of the F(0) channel; it plays a direct role in translocation across the membrane. A homomeric c-ring of between 10-14 subunits forms the central stalk rotor element with the F(1) delta and epsilon subunits. In Pelargonium hortorum (Common geranium), this protein is ATP synthase subunit c, chloroplastic.